A 1720-amino-acid polypeptide reads, in one-letter code: 6-methylcalicylic acide synthase (1720 aa).

The tract at residues 1–31 (MDKQSASGEIPAMRWEPYHRRDPRNAKELSK) is disordered. The region spanning 1–399 (MDKQSASGEI…GTVSHAVIEQ (399 aa)) is the Ketosynthase family 3 (KS3) domain. The span at 16–30 (EPYHRRDPRNAKELS) shows a compositional bias: basic and acidic residues. Active-site for beta-ketoacyl synthase activity residues include cysteine 146, histidine 281, and histidine 321. Residues 509 to 823 (VWVFSGHGAQ…IAQLHCRGAE (315 aa)) form a malonyl-CoA:ACP transacylase (MAT) domain region. The N-terminal hotdog fold stretch occupies residues 868–987 (HTLLGQRIGI…AYWARDIQEA (120 aa)). Residues 868-1139 (HTLLGQRIGI…FTAMRFSEIE (272 aa)) are dehydratase (DH) domain. The PKS/mFAS DH domain maps to 868-1144 (HTLLGQRIGI…FSEIEGTPGV (277 aa)). The Proton acceptor; for dehydratase activity role is filled by histidine 900. The tract at residues 1001–1144 (GTRIRDDFSI…FSEIEGTPGV (144 aa)) is C-terminal hotdog fold. Catalysis depends on aspartate 1065, which acts as the Proton donor; for dehydratase activity. Positions 1148–1545 (MESLVHQLAW…AVAVQWTSWR (398 aa)) are product template (PT) domain. A Carrier domain is found at 1644 to 1718 (VYLDEKIRGC…HLVGWFAEKV (75 aa)). Serine 1678 is modified (O-(pantetheine 4'-phosphoryl)serine).

It is found in the cytoplasm. The protein localises to the cytosol. It catalyses the reaction 3 malonyl-CoA + acetyl-CoA + NADPH + 3 H(+) = 6-methylsalicylate + 3 CO2 + NADP(+) + 4 CoA + H2O. It participates in mycotoxin biosynthesis; patulin biosynthesis. 6-methylsalicylic acid synthase; part of the gene cluster that mediates the biosynthesis of patulin, an acetate-derived tetraketide mycotoxin produced by several fungal species that shows antimicrobial properties against several bacteria. PatK catalyzes the first step of the pathway which is the synthesis of 6-methylsalicylic acid via condensation of 1 acetate and 3 malonate units. The pathway begins with the synthesis of 6-methylsalicylic acid by the polyketide synthase (PKS) patK via condensation of acetate and malonate units. The 6-methylsalicylic acid decarboxylase patG then catalyzes the decarboxylation of 6-methylsalicylic acid to yield m-cresol (also known as 3-methylphenol). These first reactions occur in the cytosol. The intermediate m-cresol is then transported into the endoplasmic reticulum where the cytochrome P450 monooxygenase patH converts it to m-hydroxybenzyl alcohol, which is further converted to gentisyl alcohol by the cytochrome P450 monooxygenase patI. The oxidoreductases patJ and patO further convert gentisyl alcohol to isoepoxydon in the vacuole. PatN catalyzes then the transformation of isoepoxydon into phyllostine. The cluster protein patF is responsible for the conversion from phyllostine to neopatulin whereas the alcohol dehydrogenase patD converts neopatulin to E-ascladiol. The steps between isoepoxydon and E-ascladiol occur in the cytosol, and E-ascladiol is probably secreted to the extracellular space by one of the cluster-specific transporters patC or patM. Finally, the secreted patulin synthase patE catalyzes the conversion of E-ascladiol to patulin. This Aspergillus clavatus (strain ATCC 1007 / CBS 513.65 / DSM 816 / NCTC 3887 / NRRL 1 / QM 1276 / 107) protein is 6-methylcalicylic acide synthase.